The following is a 348-amino-acid chain: High mobility group protein 20A (348 aa).

2 disordered regions span residues 1 to 114 (MENL…YVRF) and 181 to 213 (SRKAQDRQKGKLHRQDGARQPVHDHEKEADTKE). Composition is skewed to polar residues over residues 34–47 (SESSFTGGTSQPVN) and 56–71 (SQVQQLQNESTNTAEN). The span at 72-82 (TEQKPEEEQQR) shows a compositional bias: basic and acidic residues. Basic residues predominate over residues 83-97 (TKRGGWAKGRKRKKP). Residues 104 to 172 (PKSPLTGYVR…RYMRELEQYQ (69 aa)) constitute a DNA-binding region (HMG box). Residues 183 to 213 (KAQDRQKGKLHRQDGARQPVHDHEKEADTKE) are compositionally biased toward basic and acidic residues. A coiled-coil region spans residues 230–274 (SKAREAELRQLRKSNMEFEERNAALQKHVESMRTAVEKLEVDVIQ).

The protein localises to the nucleus. Functionally, plays a role in neuronal differentiation. The polypeptide is High mobility group protein 20A (HMG20A) (Gallus gallus (Chicken)).